A 459-amino-acid chain; its full sequence is MENTTVINIYCADKFFQTTYSTIKKCNFLTSKLIDNEIRLNIDPIHIEYLLNYLRGYLLDELCMEKIGYMIDVLPNHITINVGGKYYYLDRDFLCEYLEYFKVFTEYNKHLDPDYSSVLIDRSYVMFDKILEYNQKSTNIELYNFIKQELEFYLFKKEHLTNNQISSETKRQSIELSELPISKITNYEFIKYITKKTKTGNIVYKSIHENHYYHYCNSKILTHENTIILIKLNGSNIEQLLHNIVSFKRDYCDHTKQEDITISKLFQKKIAVHDKSNNLIIMDIELNDKDITIDFNYFNDGSVYIFHPINLINSEKTFFKKICKRVCQTITCRHNINMVKINITDFIEKITCNREKCVYIFDKIYFVIPNHNVSINYVELISSDFGNLTTSELLPSKTNPNKFMIKTLQTANKNIRFNICVDAIHRYSRNYLEIYYDLKQPVNTDINIMYKYHIIKQSY.

A BTB domain is found at 76 to 143; the sequence is NHITINVGGK…NQKSTNIELY (68 aa).

Belongs to the mimivirus BTB/WD family.

This Acanthamoeba polyphaga mimivirus (APMV) protein is Putative BTB/POZ domain-containing protein R541.